A 385-amino-acid chain; its full sequence is Leucine aminopeptidase 1 (385 aa).

Residues methionine 1–alanine 14 form the signal peptide. The propeptide occupies methionine 15–valine 85. The Zn(2+) site is built by histidine 185, aspartate 204, glutamate 243, and aspartate 270. A disulfide bridge links cysteine 319 with cysteine 323. Zn(2+) is bound at residue histidine 352.

It belongs to the peptidase M28 family. M28E subfamily. In terms of assembly, monomer. It depends on Zn(2+) as a cofactor.

It localises to the secreted. Its function is as follows. Extracellular aminopeptidase that allows assimilation of proteinaceous substrates. The polypeptide is Leucine aminopeptidase 1 (lap1) (Penicillium rubens (strain ATCC 28089 / DSM 1075 / NRRL 1951 / Wisconsin 54-1255) (Penicillium chrysogenum)).